Here is a 688-residue protein sequence, read N- to C-terminus: PHD finger protein 21A (688 aa).

Residue lysine 65 forms a Glycyl lysine isopeptide (Lys-Gly) (interchain with G-Cter in SUMO2) linkage. 2 disordered regions span residues 78–127 (SQSE…LTAS) and 327–373 (PQTV…ENPQ). Residues 85–127 (QTAQQQPLQPLQQQQPQQPQQQQQQQQQHAQQSAAAPPSLTAS) are compositionally biased toward low complexity. Over residues 336–354 (SLEKQTVKSHPEAEEKQAE) the composition is skewed to basic and acidic residues. The a.T hook DNA-binding region spans 434–446 (TRKRGRPPKYNAV). The tract at residues 449–471 (FGALTPTSPPSSHPDSPENEKTE) is disordered. At threonine 453 the chain carries Phosphothreonine. Residue serine 456 is modified to Phosphoserine. The PHD-type zinc-finger motif lies at 497 to 544 (EDFCSVCRKSGQLLMCDTCSRVYHLDCLEPPLKTIPKGMWICPRCQDQ). The stretch at 571-609 (KEEEKQKLLKWSSDLKQEREQLEQKVKELSSSISKCMEM) forms a coiled coil. The tract at residues 650-688 (GALSNGPDCTPPANAASTPAPSPSSQSCTANCNQGEETK) is disordered. Over residues 660–679 (PPANAASTPAPSPSSQSCTA) the composition is skewed to low complexity.

As to quaternary structure, component of a BHC histone deacetylase complex that contains HDAC1, HDAC2, HMG20B/BRAF35, KDM1A, RCOR1/CoREST and PHF21A/BHC80. The BHC complex may also contain ZMYM2, ZNF217, ZMYM3, GSE1 and GTF2I. In the complex, it interacts directly with HDAC1, HDAC2, HMG20B/BRAF35, KDM1A and RCOR1/CoREST. Expressed in the brain and testis. Weakly or not expressed in other tissues tested. Localized throughout the central nervous system (CNS) in brain, including the cerebellum, hippocampus, and cortex. Notably present in neuronal cells of granular cell layer and dentate gyrus in cerebellum and hippocampus, respectively. In the seminiferous tubules, the signals it is present strongly in spermatocytes, and weakly in spermatogonia and round spermatids. In some cases, it is also observed solely in spermatocytes (at protein level).

The protein localises to the nucleus. Its function is as follows. Component of the BHC complex, a corepressor complex that represses transcription of neuron-specific genes in non-neuronal cells. The BHC complex is recruited at RE1/NRSE sites by REST and acts by deacetylating and demethylating specific sites on histones, thereby acting as a chromatin modifier. In the BHC complex, it may act as a scaffold. Inhibits KDM1A-mediated demethylation of 'Lys-4' of histone H3 in vitro, suggesting a role in demethylation regulation. This is PHD finger protein 21A from Mus musculus (Mouse).